The following is a 367-amino-acid chain: tRNA/tmRNA (uracil-C(5))-methyltransferase (367 aa).

S-adenosyl-L-methionine contacts are provided by glutamine 190, tyrosine 218, asparagine 223, glutamate 239, and aspartate 299. Cysteine 324 acts as the Nucleophile in catalysis. Glutamate 358 (proton acceptor) is an active-site residue.

This sequence belongs to the class I-like SAM-binding methyltransferase superfamily. RNA M5U methyltransferase family. TrmA subfamily.

The enzyme catalyses uridine(54) in tRNA + S-adenosyl-L-methionine = 5-methyluridine(54) in tRNA + S-adenosyl-L-homocysteine + H(+). It carries out the reaction uridine(341) in tmRNA + S-adenosyl-L-methionine = 5-methyluridine(341) in tmRNA + S-adenosyl-L-homocysteine + H(+). Functionally, dual-specificity methyltransferase that catalyzes the formation of 5-methyluridine at position 54 (m5U54) in all tRNAs, and that of position 341 (m5U341) in tmRNA (transfer-mRNA). The protein is tRNA/tmRNA (uracil-C(5))-methyltransferase of Pectobacterium carotovorum subsp. carotovorum (strain PC1).